The primary structure comprises 184 residues: Bifunctional protein PyrR (184 aa).

The PRPP-binding signature appears at 99–111 (IVLVDDVLYTGRT).

It belongs to the purine/pyrimidine phosphoribosyltransferase family. PyrR subfamily. Homodimer and homohexamer; in equilibrium.

It catalyses the reaction UMP + diphosphate = 5-phospho-alpha-D-ribose 1-diphosphate + uracil. Regulates transcriptional attenuation of the pyrimidine nucleotide (pyr) operon by binding in a uridine-dependent manner to specific sites on pyr mRNA. This disrupts an antiterminator hairpin in the RNA and favors formation of a downstream transcription terminator, leading to a reduced expression of downstream genes. Functionally, also displays a weak uracil phosphoribosyltransferase activity which is not physiologically significant. The chain is Bifunctional protein PyrR from Acetivibrio thermocellus (strain ATCC 27405 / DSM 1237 / JCM 9322 / NBRC 103400 / NCIMB 10682 / NRRL B-4536 / VPI 7372) (Clostridium thermocellum).